A 372-amino-acid chain; its full sequence is Formylglycine-generating enzyme (372 aa).

The N-terminal stretch at 1 to 31 (MAAPAREPALRCCIRLARVFLLLVLACEVAG) is a signal peptide. An intrachain disulfide couples cysteine 48 to cysteine 50. The tract at residues 61–80 (SSAAAQRYSREANAPGLTSG) is disordered. Glutamate 128 is a binding site for Ca(2+). Asparagine 139 carries an N-linked (GlcNAc...) asparagine glycan. Intrachain disulfides connect cysteine 216-cysteine 363 and cysteine 233-cysteine 344. Residues asparagine 257, isoleucine 258, aspartate 271, phenylalanine 273, asparagine 291, glycine 294, and glutamate 298 each contribute to the Ca(2+) site. 2 residues coordinate Cu(2+): cysteine 334 and cysteine 339. The interaction with sulfatases stretch occupies residues 339–358 (CYRYRCAARSQNTPDSSASN).

Belongs to the sulfatase-modifying factor family. As to quaternary structure, monomer, homodimer and heterodimer with SUMF2. The cofactor is Cu(2+). Post-translationally, N-glycosylated. Contains high-mannose-type oligosaccharides.

It is found in the endoplasmic reticulum lumen. It catalyses the reaction L-cysteinyl-[sulfatase] + 2 a thiol + O2 = an organic disulfide + 3-oxo-L-alanyl-[sulfatase] + hydrogen sulfide + H2O + H(+). It functions in the pathway protein modification; sulfatase oxidation. In terms of biological role, oxidase that catalyzes the conversion of cysteine to 3-oxoalanine on target proteins, using molecular oxygen and an unidentified reducing agent. 3-oxoalanine modification, which is also named formylglycine (fGly), occurs in the maturation of arylsulfatases and some alkaline phosphatases that use the hydrated form of 3-oxoalanine as a catalytic nucleophile. Known substrates include GALNS, ARSA, STS and ARSE. The chain is Formylglycine-generating enzyme from Mus musculus (Mouse).